The sequence spans 931 residues: MAALDSDSDEDLVSYGTGLEPLEEGERPKKPIPLQDQTVRDEKGRYKRFHGAFSGGFSAGYFNTVGSKEGWTPSSFVSSRQNRADKSVLGPEDFMDEEDLSEFGIAPKSIVTTDDFASKTKDRIREKARQLAAATAPIPGATLLDDLITPAKLSVGFELLRKMGWKEGQGIGPRVKRRPRRQKPDPGVKIYGCALPPGGSEGSEDEDDDYLPENVTFAPKDVTPVDFTPKDNVHGLAYKGLDPHQALFGTSGEHFNLFSGGPEETGDLLGDIGVNKGRKLGISGQAFGVGALEEEDDDIYATETLSKYDTVLKDEEPGDGLYGWTAPRQYKSQKESEKDLCYVGKILDGFSLASKPLSSKKIYPPPELPRDYRPVHYFRPVVAATSENSHLLQVLSESAGKPTNDPGTRSRHQLNACKRGELLGETPIQGAPTSVLEFLSQKDKERLKEVKQATDLKAAQLRARSLAQSASGSRPQPLSPDVGHCSWHMALSGGMASTRTSNFKPFAKDPEKQKRYEEFLANMKRGQKDALERCLDPGMTEWERGRERDEFARAALLYASSHSTLSSRFTHAQEEDDSEQVEVPRDQENDVSDKQSAVKMKMFGKLTRDTFEWHPDKLLCKRFNVPDPYPDSTLVGLPRVKRDKYSVFNFLTIPETASSPVTQASSEKVAQHRASDKSRKPSRWDTSKEEKKEDSISEFLSLARSKVGPAKPEPSPLVNKEEARATESVSNKVVNKDVDSQTEGEGSRPSMDLFKAIFASSSDEKSSSSEDEQGDSEDDQEGTREADFKSSQETDLVEASSVAQASEPAPQEPAPFFPIQKMQIDEREAFGPRLPPVFCPNARQKLEAPLKEKHKKNKEKHKTKKEHRRKKEKKKKHRKHKHKGKQKNKKSEKSSSSESTDSSDSQSEEGPTDLSPQELLRRLKRLPLRRQ.

The span at 1–12 (MAALDSDSDEDL) shows a compositional bias: acidic residues. Disordered stretches follow at residues 1–41 (MAAL…TVRD), 72–92 (TPSSFVSSRQNRADKSVLGPE), and 169–213 (QGIG…YLPE). Alanine 2 carries the post-translational modification N-acetylalanine. Residues serine 6 and serine 8 each carry the phosphoserine modification. Residues 72–81 (TPSSFVSSRQ) are compositionally biased toward polar residues. One can recognise a G-patch domain in the interval 152 to 198 (KLSVGFELLRKMGWKEGQGIGPRVKRRPRRQKPDPGVKIYGCALPPG). Residues 202–211 (GSEDEDDDYL) show a composition bias toward acidic residues. A Glycyl lysine isopeptide (Lys-Gly) (interchain with G-Cter in SUMO2) cross-link involves residue lysine 313. Phosphoserine is present on residues serine 358 and serine 479. Disordered stretches follow at residues 567–594 (SRFTHAQEEDDSEQVEVPRDQENDVSDK) and 659–931 (SPVT…LRRQ). Residues 582–593 (EVPRDQENDVSD) are compositionally biased toward basic and acidic residues. Polar residues predominate over residues 659–668 (SPVTQASSEK). Positions 669–695 (VAQHRASDKSRKPSRWDTSKEEKKEDS) are enriched in basic and acidic residues. Position 715 is a phosphoserine (serine 715). The segment covering 769–780 (SEDEQGDSEDDQ) has biased composition (acidic residues). Residues 781-792 (EGTREADFKSSQ) are compositionally biased toward basic and acidic residues. Residues 852 to 888 (EKHKKNKEKHKTKKEHRRKKEKKKKHRKHKHKGKQKN) are compositionally biased toward basic residues. Low complexity predominate over residues 896–905 (SSESTDSSDS). Over residues 922–931 (RLKRLPLRRQ) the composition is skewed to basic residues.

This sequence belongs to the GPATCH1 family.

This chain is G patch domain-containing protein 1 (GPATCH1), found in Bos taurus (Bovine).